Reading from the N-terminus, the 241-residue chain is Protocatechuate 3,4-dioxygenase beta chain (241 aa).

4 residues coordinate Fe cation: Tyr109, Tyr148, His161, and His163.

It belongs to the intradiol ring-cleavage dioxygenase family. As to quaternary structure, the enzyme is an oligomer of 12 copies of the alpha and beta chains. Fe(3+) serves as cofactor.

It carries out the reaction 3,4-dihydroxybenzoate + O2 = 3-carboxy-cis,cis-muconate + 2 H(+). It functions in the pathway aromatic compound metabolism; beta-ketoadipate pathway; 3-carboxy-cis,cis-muconate from 3,4-dihydroxybenzoate: step 1/1. In terms of biological role, plays an essential role in the utilization of numerous aromatic and hydroaromatic compounds via the beta-ketoadipate pathway. The polypeptide is Protocatechuate 3,4-dioxygenase beta chain (pcaH) (Acinetobacter baylyi (strain ATCC 33305 / BD413 / ADP1)).